The primary structure comprises 980 residues: 5'-3' exoribonuclease 2 (980 aa).

A disordered region spans residues 111–133; that stretch reads KMNQQRSRRFRSAQEAQEKEQDK. A coiled-coil region spans residues 121–145; that stretch reads RSAQEAQEKEQDKQELIKMLKQQNG. The CCHC-type zinc finger occupies 269 to 286; that stretch reads RLCKICGQKGHDAQNCRG. Residues 411–435 adopt a coiled-coil conformation; it reads KRRKEQEDRREANFKRRKLQNEVNG. Over residues 413–424 the composition is skewed to basic and acidic residues; sequence RKEQEDRREANF. Disordered stretches follow at residues 413 to 461, 491 to 560, and 845 to 980; these read RKEQ…GLPL, VANK…GPVD, and SRAN…RSYR. 2 stretches are compositionally biased toward polar residues: residues 503-514 and 535-554; these read QLQSQKSLSNPK and EEGNSSVPDAASVSTPSTSA. Residues 890 to 903 are compositionally biased toward pro residues; that stretch reads PPAPASHVPPPPGA. A compositionally biased stretch (basic and acidic residues) spans 952 to 962; it reads GHGDASSERGR.

Belongs to the 5'-3' exonuclease family. XRN2/RAT1 subfamily. As to quaternary structure, interacts with RAI1; the interaction is direct, stabilizes RAT1 protein structure and may stimulate its exoribonuclease activity. The interaction also stimulates RAI1 pyrophosphohydrolase activity, probably by recruiting it to mRNA substrates.

Its subcellular location is the nucleus. In terms of biological role, possesses 5'-&gt;3' exoribonuclease activity. Required for the processing of nuclear mRNA and rRNA precursors. May promote the termination of transcription by RNA polymerase II. Essential for vegetative cell growth and chromosome segregation. This is 5'-3' exoribonuclease 2 (RAT1) from Gibberella zeae (strain ATCC MYA-4620 / CBS 123657 / FGSC 9075 / NRRL 31084 / PH-1) (Wheat head blight fungus).